We begin with the raw amino-acid sequence, 153 residues long: Ribosome maturation factor RimP (153 aa).

The protein belongs to the RimP family.

The protein localises to the cytoplasm. Required for maturation of 30S ribosomal subunits. This chain is Ribosome maturation factor RimP, found in Chromohalobacter salexigens (strain ATCC BAA-138 / DSM 3043 / CIP 106854 / NCIMB 13768 / 1H11).